Here is a 491-residue protein sequence, read N- to C-terminus: Ketol-acid reductoisomerase (NADP(+)) (491 aa).

In terms of domain architecture, KARI N-terminal Rossmann spans 15–208 (AQLGKCRFMG…GGHRAGVLES (194 aa)). NADP(+)-binding positions include 45 to 48 (CGAQ), arginine 68, arginine 76, serine 78, and 108 to 110 (DKQ). Residue histidine 132 is part of the active site. Glycine 158 contacts NADP(+). KARI C-terminal knotted domains lie at 209 to 344 (SFVA…TAPQ) and 345 to 484 (YEGK…MTDM). Mg(2+) contacts are provided by aspartate 217, glutamate 221, glutamate 389, and glutamate 393. Position 414 (serine 414) interacts with substrate.

Belongs to the ketol-acid reductoisomerase family. Mg(2+) is required as a cofactor.

The catalysed reaction is (2R)-2,3-dihydroxy-3-methylbutanoate + NADP(+) = (2S)-2-acetolactate + NADPH + H(+). The enzyme catalyses (2R,3R)-2,3-dihydroxy-3-methylpentanoate + NADP(+) = (S)-2-ethyl-2-hydroxy-3-oxobutanoate + NADPH + H(+). The protein operates within amino-acid biosynthesis; L-isoleucine biosynthesis; L-isoleucine from 2-oxobutanoate: step 2/4. Its pathway is amino-acid biosynthesis; L-valine biosynthesis; L-valine from pyruvate: step 2/4. Involved in the biosynthesis of branched-chain amino acids (BCAA). Catalyzes an alkyl-migration followed by a ketol-acid reduction of (S)-2-acetolactate (S2AL) to yield (R)-2,3-dihydroxy-isovalerate. In the isomerase reaction, S2AL is rearranged via a Mg-dependent methyl migration to produce 3-hydroxy-3-methyl-2-ketobutyrate (HMKB). In the reductase reaction, this 2-ketoacid undergoes a metal-dependent reduction by NADPH to yield (R)-2,3-dihydroxy-isovalerate. The polypeptide is Ketol-acid reductoisomerase (NADP(+)) (Shigella dysenteriae serotype 1 (strain Sd197)).